We begin with the raw amino-acid sequence, 61 residues long: Small ribosomal subunit protein uS14 (61 aa).

Residues C24, C27, C40, and C43 each coordinate Zn(2+).

Belongs to the universal ribosomal protein uS14 family. Zinc-binding uS14 subfamily. Part of the 30S ribosomal subunit. Contacts proteins S3 and S10. The cofactor is Zn(2+).

Its function is as follows. Binds 16S rRNA, required for the assembly of 30S particles and may also be responsible for determining the conformation of the 16S rRNA at the A site. The polypeptide is Small ribosomal subunit protein uS14 (Sulfurimonas denitrificans (strain ATCC 33889 / DSM 1251) (Thiomicrospira denitrificans (strain ATCC 33889 / DSM 1251))).